Consider the following 687-residue polypeptide: DnaJ protein ERDJ2A (687 aa).

The Lumenal segment spans residues 1-8 (MAASEENS). A helical membrane pass occupies residues 9-29 (ALFPIFILTIMAIPLVPYTMV). Residues 30–65 (KLSGALSKKQRTIHCQCLECDRSGKYKRSLFKKISN) lie on the Cytoplasmic side of the membrane. Residues 66–86 (FSTWSNLTLVLLWVVMIFLIY) traverse the membrane as a helical segment. The Lumenal portion of the chain corresponds to 87-190 (YTKNMSREAQ…FLLDIDGASG (104 aa)). N-linked (GlcNAc...) asparagine glycosylation is present at Asn90. Residues 99-164 (DPFSILGLEP…VSRENFEKYG (66 aa)) enclose the J domain. The chain crosses the membrane as a helical span at residues 191–211 (GILLLWIVGVCILLPLVIAVI). The SEC63 domain maps to 205 to 603 (PLVIAVIYLS…IGCDKKQALK (399 aa)). Residues 212 to 687 (YLSRSSKYTG…SSEESGSEEE (476 aa)) are Cytoplasmic-facing. The segment at 619-687 (SDEGAIAEEG…SSEESGSEEE (69 aa)) is disordered. Acidic residues predominate over residues 623–654 (AIAEEGMEEEDEIEEEDYDDDYESEYSEDEDE).

In terms of assembly, interacts with OEP61/TPR7. Expressed in leaves, flower buds and flowers.

The protein resides in the endoplasmic reticulum membrane. Its function is as follows. Required for integral membrane and secreted preprotein translocation across the endoplasmic reticulum membrane. This Arabidopsis thaliana (Mouse-ear cress) protein is DnaJ protein ERDJ2A (ERDJ2A).